The chain runs to 162 residues: UPF0262 protein Acry_0160 (162 aa).

It belongs to the UPF0262 family.

The chain is UPF0262 protein Acry_0160 from Acidiphilium cryptum (strain JF-5).